We begin with the raw amino-acid sequence, 309 residues long: Tagatose-6-phosphate kinase (309 aa).

It belongs to the carbohydrate kinase PfkB family. LacC subfamily.

It catalyses the reaction D-tagatofuranose 6-phosphate + ATP = D-tagatofuranose 1,6-bisphosphate + ADP + H(+). Its pathway is carbohydrate metabolism; D-tagatose 6-phosphate degradation; D-glyceraldehyde 3-phosphate and glycerone phosphate from D-tagatose 6-phosphate: step 1/2. This is Tagatose-6-phosphate kinase from Streptococcus pneumoniae (strain Hungary19A-6).